Here is a 179-residue protein sequence, read N- to C-terminus: Peptidyl-tRNA hydrolase (179 aa).

Position 14 (Y14) interacts with tRNA. Catalysis depends on H19, which acts as the Proton acceptor. TRNA-binding residues include Y60, N62, and N108.

This sequence belongs to the PTH family. As to quaternary structure, monomer.

The protein resides in the cytoplasm. It carries out the reaction an N-acyl-L-alpha-aminoacyl-tRNA + H2O = an N-acyl-L-amino acid + a tRNA + H(+). Hydrolyzes ribosome-free peptidyl-tRNAs (with 1 or more amino acids incorporated), which drop off the ribosome during protein synthesis, or as a result of ribosome stalling. In terms of biological role, catalyzes the release of premature peptidyl moieties from peptidyl-tRNA molecules trapped in stalled 50S ribosomal subunits, and thus maintains levels of free tRNAs and 50S ribosomes. The polypeptide is Peptidyl-tRNA hydrolase (Mycoplasma mobile (strain ATCC 43663 / 163K / NCTC 11711) (Mesomycoplasma mobile)).